The following is a 491-amino-acid chain: Protein nucleotidyltransferase YdiU (491 aa).

ATP contacts are provided by G88, G90, R91, K111, D123, G124, R174, and R181. D250 functions as the Proton acceptor in the catalytic mechanism. 2 residues coordinate Mg(2+): N251 and D260. D260 provides a ligand contact to ATP.

Belongs to the SELO family. The cofactor is Mg(2+). Mn(2+) is required as a cofactor.

It catalyses the reaction L-seryl-[protein] + ATP = 3-O-(5'-adenylyl)-L-seryl-[protein] + diphosphate. The catalysed reaction is L-threonyl-[protein] + ATP = 3-O-(5'-adenylyl)-L-threonyl-[protein] + diphosphate. It carries out the reaction L-tyrosyl-[protein] + ATP = O-(5'-adenylyl)-L-tyrosyl-[protein] + diphosphate. The enzyme catalyses L-histidyl-[protein] + UTP = N(tele)-(5'-uridylyl)-L-histidyl-[protein] + diphosphate. It catalyses the reaction L-seryl-[protein] + UTP = O-(5'-uridylyl)-L-seryl-[protein] + diphosphate. The catalysed reaction is L-tyrosyl-[protein] + UTP = O-(5'-uridylyl)-L-tyrosyl-[protein] + diphosphate. Nucleotidyltransferase involved in the post-translational modification of proteins. It can catalyze the addition of adenosine monophosphate (AMP) or uridine monophosphate (UMP) to a protein, resulting in modifications known as AMPylation and UMPylation. The chain is Protein nucleotidyltransferase YdiU from Rhodopseudomonas palustris (strain BisB18).